Here is a 382-residue protein sequence, read N- to C-terminus: uncharacterized protein (382 aa).

12 helical membrane-spanning segments follow: residues 8–28 (VLLL…LNTL), 41–61 (WQVG…TLIA), 73–93 (SYHY…LSVD), 94–114 (FWSW…IWVI), 133–153 (AAYM…LGVV), 157–177 (LLSV…PLLF), 208–228 (GCII…LYLS), 235–255 (ASVG…QWPI), 274–294 (VVIL…ALFI), 295–315 (LGCA…EKVS), 325–345 (ALLM…SLLM), and 349–369 (SDNL…MMLL).

The protein belongs to the major facilitator superfamily. YcaD (TC 2.A.1.26) family.

Its subcellular location is the cell inner membrane. This is an uncharacterized protein from Yersinia enterocolitica serotype O:8 / biotype 1B (strain NCTC 13174 / 8081).